A 427-amino-acid polypeptide reads, in one-letter code: Peptidase B (427 aa).

The Mn(2+) site is built by Lys195 and Asp200. Lys207 is a catalytic residue. Residues Asp218, Asp277, and Glu279 each coordinate Mn(2+). Arg281 is a catalytic residue.

This sequence belongs to the peptidase M17 family. As to quaternary structure, homohexamer. The cofactor is Mn(2+).

The protein resides in the cytoplasm. It catalyses the reaction Release of an N-terminal amino acid, Xaa, from a peptide or arylamide. Xaa is preferably Glu or Asp but may be other amino acids, including Leu, Met, His, Cys and Gln.. Probably plays an important role in intracellular peptide degradation. The sequence is that of Peptidase B from Shigella boydii serotype 18 (strain CDC 3083-94 / BS512).